A 54-amino-acid chain; its full sequence is Rubredoxin (54 aa).

M1 carries the N-formylmethionine modification. The Rubredoxin-like domain occupies 1 to 54 (MKKYTCTVCGYIYNPEDGDPDNGVNPGTDFKDIPDDWVCPLCGVGKDQFEEVEE). Fe cation is bound by residues C6, C9, C39, and C42.

The protein belongs to the rubredoxin family. Requires Fe(3+) as cofactor.

In terms of biological role, rubredoxin is a small nonheme, iron protein lacking acid-labile sulfide. Its single Fe, chelated to 4 Cys, functions as an electron acceptor and may also stabilize the conformation of the molecule. The chain is Rubredoxin from Clostridium pasteurianum.